A 274-amino-acid chain; its full sequence is Large ribosomal subunit protein uL2cz/uL2cy (274 aa).

The tract at residues 225-274 (PVDHPHGGGEGRAPIGRKKPVTPWGYPALGRRSRKRKKYSDNLILRRRTK) is disordered.

Belongs to the universal ribosomal protein uL2 family. As to quaternary structure, part of the 50S ribosomal subunit.

The protein localises to the plastid. The protein resides in the chloroplast. The protein is Large ribosomal subunit protein uL2cz/uL2cy (rpl2-A) of Lotus japonicus (Lotus corniculatus var. japonicus).